A 304-amino-acid chain; its full sequence is Developmental pluripotency-associated protein 4 (304 aa).

A compositionally biased stretch (polar residues) spans 1–11 (MLRGSASSTSM). 2 disordered regions span residues 1–84 (MLRG…IPPL) and 147–176 (KKLK…VGEP). A compositionally biased stretch (basic and acidic residues) spans 12-29 (EKAKGKEWTSTEKSREED). At Thr-215 the chain carries Phosphothreonine. A phosphoserine mark is found at Ser-221 and Ser-226.

As to quaternary structure, interacts with DPPA2. Interacts with PCGF1.

The protein localises to the nucleus. Functionally, may be involved in the maintenance of active epigenetic status of target genes. May inhibit differentiation of embryonic cells into a primitive ectoderm lineage. This chain is Developmental pluripotency-associated protein 4 (DPPA4), found in Homo sapiens (Human).